The sequence spans 163 residues: Transcription antitermination protein NusB (163 aa).

The protein belongs to the NusB family.

Its function is as follows. Involved in transcription antitermination. Required for transcription of ribosomal RNA (rRNA) genes. Binds specifically to the boxA antiterminator sequence of the ribosomal RNA (rrn) operons. This Chlorobium luteolum (strain DSM 273 / BCRC 81028 / 2530) (Pelodictyon luteolum) protein is Transcription antitermination protein NusB.